A 36-amino-acid polypeptide reads, in one-letter code: Toxin Bcg III 29.21 (36 aa).

An intrachain disulfide couples Cys-6 to Cys-31.

Its subcellular location is the secreted. The protein resides in the nematocyst. In Bunodosoma cangicum (Sea anemone), this protein is Toxin Bcg III 29.21.